A 274-amino-acid polypeptide reads, in one-letter code: Glutamate racemase (274 aa).

Residues 9 to 10 and 41 to 42 contribute to the substrate site; these read DS and YG. The active-site Proton donor/acceptor is the cysteine 72. Position 73 to 74 (73 to 74) interacts with substrate; that stretch reads NT. The Proton donor/acceptor role is filled by cysteine 184. 185 to 186 serves as a coordination point for substrate; that stretch reads TH.

It belongs to the aspartate/glutamate racemases family.

The enzyme catalyses L-glutamate = D-glutamate. It functions in the pathway cell wall biogenesis; peptidoglycan biosynthesis. Its function is as follows. Provides the (R)-glutamate required for cell wall biosynthesis. The chain is Glutamate racemase from Oceanobacillus iheyensis (strain DSM 14371 / CIP 107618 / JCM 11309 / KCTC 3954 / HTE831).